Consider the following 509-residue polypeptide: Probable Xaa-Pro aminopeptidase MAC_04092 (509 aa).

Residues D273, D284, E437, and E478 each contribute to the Mn(2+) site.

This sequence belongs to the peptidase M24B family. Requires Mn(2+) as cofactor.

It carries out the reaction Release of any N-terminal amino acid, including proline, that is linked to proline, even from a dipeptide or tripeptide.. In terms of biological role, catalyzes the removal of a penultimate prolyl residue from the N-termini of peptides. This chain is Probable Xaa-Pro aminopeptidase MAC_04092, found in Metarhizium acridum (strain CQMa 102).